The primary structure comprises 447 residues: Ribulose bisphosphate carboxylase large chain (447 aa).

Residues asparagine 89 and threonine 139 each contribute to the substrate site. The active-site Proton acceptor is the lysine 141. Lysine 143 contacts substrate. 3 residues coordinate Mg(2+): lysine 167, aspartate 169, and glutamate 170. Lysine 167 bears the N6-carboxylysine mark. Residue histidine 260 is the Proton acceptor of the active site. Residues arginine 261, histidine 293, and serine 345 each contribute to the substrate site.

It belongs to the RuBisCO large chain family. Type I subfamily. In terms of assembly, heterohexadecamer of 8 large chains and 8 small chains; disulfide-linked. The disulfide link is formed within the large subunit homodimers. Requires Mg(2+) as cofactor. Post-translationally, the disulfide bond which can form in the large chain dimeric partners within the hexadecamer appears to be associated with oxidative stress and protein turnover.

The protein resides in the plastid. It is found in the chloroplast. The catalysed reaction is 2 (2R)-3-phosphoglycerate + 2 H(+) = D-ribulose 1,5-bisphosphate + CO2 + H2O. The enzyme catalyses D-ribulose 1,5-bisphosphate + O2 = 2-phosphoglycolate + (2R)-3-phosphoglycerate + 2 H(+). RuBisCO catalyzes two reactions: the carboxylation of D-ribulose 1,5-bisphosphate, the primary event in carbon dioxide fixation, as well as the oxidative fragmentation of the pentose substrate in the photorespiration process. Both reactions occur simultaneously and in competition at the same active site. The protein is Ribulose bisphosphate carboxylase large chain of Ligustrum vulgare (Common privet).